The chain runs to 313 residues: Porphobilinogen deaminase (313 aa).

Cys-242 is modified (S-(dipyrrolylmethanemethyl)cysteine).

This sequence belongs to the HMBS family. As to quaternary structure, monomer. Requires dipyrromethane as cofactor.

The catalysed reaction is 4 porphobilinogen + H2O = hydroxymethylbilane + 4 NH4(+). It functions in the pathway porphyrin-containing compound metabolism; protoporphyrin-IX biosynthesis; coproporphyrinogen-III from 5-aminolevulinate: step 2/4. Its function is as follows. Tetrapolymerization of the monopyrrole PBG into the hydroxymethylbilane pre-uroporphyrinogen in several discrete steps. This Klebsiella pneumoniae (strain 342) protein is Porphobilinogen deaminase.